Consider the following 639-residue polypeptide: Chaperone protein DnaK (639 aa).

T198 is modified (phosphothreonine; by autocatalysis). The disordered stretch occupies residues 602–639 (QAKSQAQGGDNADAGKQANATADDVVDAEFEEVKDDKK). Acidic residues predominate over residues 625–639 (DVVDAEFEEVKDDKK).

It belongs to the heat shock protein 70 family.

Functionally, acts as a chaperone. The polypeptide is Chaperone protein DnaK (Shewanella baltica (strain OS155 / ATCC BAA-1091)).